The sequence spans 190 residues: Inosine triphosphate pyrophosphatase (190 aa).

ITP is bound at residue T10–K15. Residue E40 coordinates Mg(2+). Residues K52, D68–T69, K85, F144–D147, K167, and H172–R173 each bind ITP.

Belongs to the HAM1 NTPase family. In terms of assembly, homodimer. Mg(2+) is required as a cofactor. Requires Mn(2+) as cofactor.

It localises to the cytoplasm. The enzyme catalyses ITP + H2O = IMP + diphosphate + H(+). The catalysed reaction is dITP + H2O = dIMP + diphosphate + H(+). It carries out the reaction XTP + H2O = XMP + diphosphate + H(+). Functionally, pyrophosphatase that hydrolyzes non-canonical purine nucleotides such as inosine triphosphate (ITP), deoxyinosine triphosphate (dITP) or xanthosine 5'-triphosphate (XTP) to their respective monophosphate derivatives. The enzyme does not distinguish between the deoxy- and ribose forms. Probably excludes non-canonical purines from RNA and DNA precursor pools, thus preventing their incorporation into RNA and DNA and avoiding chromosomal lesions. This is Inosine triphosphate pyrophosphatase from Culex quinquefasciatus (Southern house mosquito).